The primary structure comprises 299 residues: Sulfotransferase 1B1 (299 aa).

48–53 (KSGTTW) contributes to the 3'-phosphoadenylyl sulfate binding site. 107-109 (KTH) contributes to the substrate binding site. His109 functions as the Proton acceptor in the catalytic mechanism. 3'-phosphoadenylyl sulfate-binding positions include Arg131, Ser139, Tyr194, 228 to 233 (TSFEMM), and 258 to 260 (RKG).

This sequence belongs to the sulfotransferase 1 family. Liver specific.

It localises to the cytoplasm. The enzyme catalyses a phenol + 3'-phosphoadenylyl sulfate = an aryl sulfate + adenosine 3',5'-bisphosphate + H(+). It carries out the reaction 3,3',5-triiodo-L-thyronine + 3'-phosphoadenylyl sulfate = 3,3',5-triiodo-L-thyronine sulfate + adenosine 3',5'-bisphosphate + H(+). The catalysed reaction is 3,3',5'-triiodo-L-thyronine + 3'-phosphoadenylyl sulfate = 3,3',5'-triiodo-L-thyronine sulfate + adenosine 3',5'-bisphosphate + H(+). It catalyses the reaction 3,3'-diiodo-L-thyronine + 3'-phosphoadenylyl sulfate = 3,3'-diiodo-L-thyronine sulfate + adenosine 3',5'-bisphosphate + H(+). The enzyme catalyses dopamine + 3'-phosphoadenylyl sulfate = dopamine 3-O-sulfate + adenosine 3',5'-bisphosphate + H(+). It carries out the reaction dopamine + 3'-phosphoadenylyl sulfate = dopamine 4-O-sulfate + adenosine 3',5'-bisphosphate + H(+). The catalysed reaction is 4-ethylphenol + 3'-phosphoadenylyl sulfate = 4-ethylphenyl sulfate + adenosine 3',5'-bisphosphate + H(+). Functionally, sulfotransferase that utilizes 3'-phospho-5'-adenylyl sulfate (PAPS) as sulfonate donor to catalyze the sulfate conjugation of dopamine, small phenols such as 1-naphthol and p-nitrophenol and thyroid hormones, including 3,3'-diiodothyronine, triidothyronine (T3) and reverse triiodothyronine (rT3). May play a role in gut microbiota-host metabolic interaction. O-sulfonates 4-ethylphenol (4-EP), a dietary tyrosine-derived metabolite produced by gut bacteria. The product 4-EPS crosses the blood-brain barrier and may negatively regulate oligodendrocyte maturation and myelination, affecting the functional connectivity of different brain regions associated with the limbic system. This chain is Sulfotransferase 1B1, found in Mus musculus (Mouse).